The sequence spans 145 residues: MNASNPCRRFPRSARVRTRAQYTIVFDTARRTSDPLLSLHWRTGDTPPRLGMAVSRKVDTRAVGRNRIKRVLRDAMRHLLPELAGGDYVIVARSAAAKATNPQIRDAFVRLLRRAGALPLPAAPGTMPPARTVRPSSPSPTEPEL.

A disordered region spans residues 119–145 (PLPAAPGTMPPARTVRPSSPSPTEPEL).

The protein belongs to the RnpA family. Consists of a catalytic RNA component (M1 or rnpB) and a protein subunit.

The enzyme catalyses Endonucleolytic cleavage of RNA, removing 5'-extranucleotides from tRNA precursor.. RNaseP catalyzes the removal of the 5'-leader sequence from pre-tRNA to produce the mature 5'-terminus. It can also cleave other RNA substrates such as 4.5S RNA. The protein component plays an auxiliary but essential role in vivo by binding to the 5'-leader sequence and broadening the substrate specificity of the ribozyme. The protein is Ribonuclease P protein component of Xanthomonas euvesicatoria pv. vesicatoria (strain 85-10) (Xanthomonas campestris pv. vesicatoria).